The following is a 1049-amino-acid chain: DEAD-box ATP-dependent RNA helicase 42 (1049 aa).

Disordered regions lie at residues 1 to 279 and 299 to 358; these read MGSS…DEID and MPAA…DDEE. The segment covering 64–106 has biased composition (basic and acidic residues); it reads KERDREERKAREREEREKEKERERARRREERDREERSRRREAA. Positions 118 to 131 are enriched in basic residues; the sequence is RKRRRRSSHHHHHH. Composition is skewed to basic and acidic residues over residues 161–170 and 181–199; these read KKEEEQKQLD and KEWQ…REQE. Over residues 201-214 the composition is skewed to low complexity; it reads AGVGTSAAAAAAPA. A compositionally biased stretch (acidic residues) spans 229 to 239; it reads DGEESDEEGNQ. Over residues 262–272 the composition is skewed to low complexity; it reads NGGDNANGANA. Basic and acidic residues predominate over residues 304–313; that stretch reads VDDKNDKSAK. The span at 335 to 358 shows a compositional bias: acidic residues; sequence EDSDSDYADDEDDEGGSEDEDDEE. The Q motif signature appears at 424-452; sequence KTWVQSGLTSKLLDTIKKLGFEKPMSIQA. The region spanning 455 to 633 is the Helicase ATP-binding domain; sequence LPIIMSGRDC…RKVLTKPVEI (179 aa). 468–475 is an ATP binding site; it reads AKTGSGKT. A DEAD box motif is present at residues 581–584; that stretch reads DEAD. The Helicase C-terminal domain maps to 644-805; the sequence is DITQLVEVRP…AVPEDLKGLA (162 aa). A disordered region spans residues 816–868; that stretch reads TEQAHGTGYGGSGFKFNEEEDEARKSAKKAQAREYGYEEDKSDSDSDEEGGVR. Residues 855 to 864 are compositionally biased toward acidic residues; it reads DKSDSDSDEE. Positions 1012-1037 form a coiled coil; it reads TELSVKKAKAELKRVLEDCANHALNL.

Belongs to the DEAD box helicase family. DDX46/PRP5 subfamily.

The catalysed reaction is ATP + H2O = ADP + phosphate + H(+). The polypeptide is DEAD-box ATP-dependent RNA helicase 42 (Oryza sativa subsp. japonica (Rice)).